The primary structure comprises 440 residues: Proline--tRNA ligase (440 aa).

It belongs to the class-II aminoacyl-tRNA synthetase family. ProS type 2 subfamily. In terms of assembly, homodimer.

The protein localises to the cytoplasm. It carries out the reaction tRNA(Pro) + L-proline + ATP = L-prolyl-tRNA(Pro) + AMP + diphosphate. In terms of biological role, catalyzes the attachment of proline to tRNA(Pro) in a two-step reaction: proline is first activated by ATP to form Pro-AMP and then transferred to the acceptor end of tRNA(Pro). This chain is Proline--tRNA ligase, found in Azorhizobium caulinodans (strain ATCC 43989 / DSM 5975 / JCM 20966 / LMG 6465 / NBRC 14845 / NCIMB 13405 / ORS 571).